The sequence spans 369 residues: Anhydro-N-acetylmuramic acid kinase (369 aa).

An ATP-binding site is contributed by G12 to D19.

This sequence belongs to the anhydro-N-acetylmuramic acid kinase family.

The catalysed reaction is 1,6-anhydro-N-acetyl-beta-muramate + ATP + H2O = N-acetyl-D-muramate 6-phosphate + ADP + H(+). It participates in amino-sugar metabolism; 1,6-anhydro-N-acetylmuramate degradation. Its pathway is cell wall biogenesis; peptidoglycan recycling. Its function is as follows. Catalyzes the specific phosphorylation of 1,6-anhydro-N-acetylmuramic acid (anhMurNAc) with the simultaneous cleavage of the 1,6-anhydro ring, generating MurNAc-6-P. Is required for the utilization of anhMurNAc either imported from the medium or derived from its own cell wall murein, and thus plays a role in cell wall recycling. In Shewanella sp. (strain W3-18-1), this protein is Anhydro-N-acetylmuramic acid kinase.